The chain runs to 360 residues: 3-dehydroquinate synthase (360 aa).

NAD(+)-binding positions include 71–76 (DGEQFK), 105–109 (GVIGD), 129–130 (TT), K142, K151, and 169–172 (FLKT). E184, H247, and H264 together coordinate Zn(2+).

The protein belongs to the sugar phosphate cyclases superfamily. Dehydroquinate synthase family. NAD(+) serves as cofactor. The cofactor is Co(2+). It depends on Zn(2+) as a cofactor.

Its subcellular location is the cytoplasm. It catalyses the reaction 7-phospho-2-dehydro-3-deoxy-D-arabino-heptonate = 3-dehydroquinate + phosphate. It participates in metabolic intermediate biosynthesis; chorismate biosynthesis; chorismate from D-erythrose 4-phosphate and phosphoenolpyruvate: step 2/7. In terms of biological role, catalyzes the conversion of 3-deoxy-D-arabino-heptulosonate 7-phosphate (DAHP) to dehydroquinate (DHQ). The sequence is that of 3-dehydroquinate synthase from Buchnera aphidicola subsp. Schizaphis graminum (strain Sg).